A 336-amino-acid chain; its full sequence is tRNA N6-adenosine threonylcarbamoyltransferase (336 aa).

H111 and H115 together coordinate Fe cation. Residues 134–138, D167, G180, and N270 each bind substrate; that span reads LVSGG. Fe cation is bound at residue D298.

Belongs to the KAE1 / TsaD family. It depends on Fe(2+) as a cofactor.

It localises to the cytoplasm. The enzyme catalyses L-threonylcarbamoyladenylate + adenosine(37) in tRNA = N(6)-L-threonylcarbamoyladenosine(37) in tRNA + AMP + H(+). Functionally, required for the formation of a threonylcarbamoyl group on adenosine at position 37 (t(6)A37) in tRNAs that read codons beginning with adenine. Is involved in the transfer of the threonylcarbamoyl moiety of threonylcarbamoyl-AMP (TC-AMP) to the N6 group of A37, together with TsaE and TsaB. TsaD likely plays a direct catalytic role in this reaction. This is tRNA N6-adenosine threonylcarbamoyltransferase from Acinetobacter baumannii (strain SDF).